Here is a 277-residue protein sequence, read N- to C-terminus: Large ribosomal subunit protein uL2 (277 aa).

Disordered stretches follow at residues 37 to 60 (KNST…GHKH) and 223 to 264 (VVMN…NKRT). Residues 39–49 (STAGRNNNGHI) show a composition bias toward polar residues. Basic residues predominate over residues 50–60 (TTRHKGGGHKH). A compositionally biased stretch (basic and acidic residues) spans 229–244 (DHPHGGGEGRTGEARE).

The protein belongs to the universal ribosomal protein uL2 family. Part of the 50S ribosomal subunit. Forms a bridge to the 30S subunit in the 70S ribosome.

In terms of biological role, one of the primary rRNA binding proteins. Required for association of the 30S and 50S subunits to form the 70S ribosome, for tRNA binding and peptide bond formation. It has been suggested to have peptidyltransferase activity; this is somewhat controversial. Makes several contacts with the 16S rRNA in the 70S ribosome. This is Large ribosomal subunit protein uL2 from Neisseria gonorrhoeae (strain ATCC 700825 / FA 1090).